The chain runs to 152 residues: Ribosome maturation factor RimP (152 aa).

This sequence belongs to the RimP family.

Its subcellular location is the cytoplasm. In terms of biological role, required for maturation of 30S ribosomal subunits. The protein is Ribosome maturation factor RimP of Yersinia pestis.